The chain runs to 78 residues: Small ribosomal subunit protein uS15c (78 aa).

Belongs to the universal ribosomal protein uS15 family. Part of the 30S ribosomal subunit.

The protein localises to the plastid. It is found in the chloroplast. The protein is Small ribosomal subunit protein uS15c (rps15-A) of Saccharum officinarum (Sugarcane).